A 338-amino-acid chain; its full sequence is Phenylalanine--tRNA ligase alpha subunit (338 aa).

Glutamate 252 is a Mg(2+) binding site.

The protein belongs to the class-II aminoacyl-tRNA synthetase family. Phe-tRNA synthetase alpha subunit type 1 subfamily. In terms of assembly, tetramer of two alpha and two beta subunits. It depends on Mg(2+) as a cofactor.

The protein resides in the cytoplasm. The catalysed reaction is tRNA(Phe) + L-phenylalanine + ATP = L-phenylalanyl-tRNA(Phe) + AMP + diphosphate + H(+). This is Phenylalanine--tRNA ligase alpha subunit from Pseudomonas syringae pv. syringae (strain B728a).